The sequence spans 234 residues: MGAQWKVKHKEAAANAKGRTFGKLSKEIMIAARAGADPDMNSRLRLVVEQAKKASMPRETLERAIKKGAGLLGESVNFERLTYEGFAPHRVPVIVECLTDNINRTVSEIRVLFRKGQLGAAGSVSWDFLYQGMIEAVPAAADADPELAAIEAGAQDFEPGEEGATLFLTESTDMDAVCKALPEFGFTVQSAQLGYRPKSTVDGLTDEQMAEVEAFLEAIDNHDDVQNVYVGLAG.

The protein belongs to the TACO1 family.

It localises to the cytoplasm. The polypeptide is Probable transcriptional regulatory protein Psyr_3028 (Pseudomonas syringae pv. syringae (strain B728a)).